Here is a 350-residue protein sequence, read N- to C-terminus: Methionine import ATP-binding protein MetN (350 aa).

The region spanning 2-242 (IELKGISQHF…PRHDVTRALI (241 aa)) is the ABC transporter domain. Residue 39–46 (GRSGAGKS) participates in ATP binding.

It belongs to the ABC transporter superfamily. Methionine importer (TC 3.A.1.24) family. As to quaternary structure, the complex is composed of two ATP-binding proteins (MetN), two transmembrane proteins (MetI) and a solute-binding protein (MetQ).

It localises to the cell inner membrane. The catalysed reaction is L-methionine(out) + ATP + H2O = L-methionine(in) + ADP + phosphate + H(+). The enzyme catalyses D-methionine(out) + ATP + H2O = D-methionine(in) + ADP + phosphate + H(+). Part of the ABC transporter complex MetNIQ involved in methionine import. Responsible for energy coupling to the transport system. This is Methionine import ATP-binding protein MetN from Ralstonia nicotianae (strain ATCC BAA-1114 / GMI1000) (Ralstonia solanacearum).